The sequence spans 213 residues: StAR-related lipid transfer protein 5 (213 aa).

In terms of domain architecture, START spans 1-213 (MDPALAAQMS…LQKAVKQFHE (213 aa)).

Its function is as follows. May be involved in the intracellular transport of sterols or other lipids. May bind cholesterol or other sterols. This chain is StAR-related lipid transfer protein 5 (STARD5), found in Homo sapiens (Human).